Consider the following 242-residue polypeptide: Biosynthetic peptidoglycan transglycosylase (242 aa).

Residues leucine 19–valine 39 form a helical membrane-spanning segment.

The protein belongs to the glycosyltransferase 51 family.

It localises to the cell inner membrane. It carries out the reaction [GlcNAc-(1-&gt;4)-Mur2Ac(oyl-L-Ala-gamma-D-Glu-L-Lys-D-Ala-D-Ala)](n)-di-trans,octa-cis-undecaprenyl diphosphate + beta-D-GlcNAc-(1-&gt;4)-Mur2Ac(oyl-L-Ala-gamma-D-Glu-L-Lys-D-Ala-D-Ala)-di-trans,octa-cis-undecaprenyl diphosphate = [GlcNAc-(1-&gt;4)-Mur2Ac(oyl-L-Ala-gamma-D-Glu-L-Lys-D-Ala-D-Ala)](n+1)-di-trans,octa-cis-undecaprenyl diphosphate + di-trans,octa-cis-undecaprenyl diphosphate + H(+). It participates in cell wall biogenesis; peptidoglycan biosynthesis. In terms of biological role, peptidoglycan polymerase that catalyzes glycan chain elongation from lipid-linked precursors. The chain is Biosynthetic peptidoglycan transglycosylase from Escherichia coli (strain 55989 / EAEC).